Here is a 512-residue protein sequence, read N- to C-terminus: 2-isopropylmalate synthase (512 aa).

Residues 4-266 (IQFFDTTLRD…ETNIVLNQFK (263 aa)) form the Pyruvate carboxyltransferase domain. Mn(2+) is bound by residues Asp-13, His-201, His-203, and Asn-237. A regulatory domain region spans residues 390 to 512 (ELKHLQVQYV…TKQVDFEEVK (123 aa)).

The protein belongs to the alpha-IPM synthase/homocitrate synthase family. LeuA type 1 subfamily. In terms of assembly, homodimer. Requires Mn(2+) as cofactor.

It is found in the cytoplasm. The catalysed reaction is 3-methyl-2-oxobutanoate + acetyl-CoA + H2O = (2S)-2-isopropylmalate + CoA + H(+). Its pathway is amino-acid biosynthesis; L-leucine biosynthesis; L-leucine from 3-methyl-2-oxobutanoate: step 1/4. Catalyzes the condensation of the acetyl group of acetyl-CoA with 3-methyl-2-oxobutanoate (2-ketoisovalerate) to form 3-carboxy-3-hydroxy-4-methylpentanoate (2-isopropylmalate). In Listeria welshimeri serovar 6b (strain ATCC 35897 / DSM 20650 / CCUG 15529 / CIP 8149 / NCTC 11857 / SLCC 5334 / V8), this protein is 2-isopropylmalate synthase.